The primary structure comprises 212 residues: Thymidylate kinase (212 aa).

10–17 (GPDGSGKS) is a binding site for ATP.

The protein belongs to the thymidylate kinase family.

The enzyme catalyses dTMP + ATP = dTDP + ADP. Its function is as follows. Phosphorylation of dTMP to form dTDP in both de novo and salvage pathways of dTTP synthesis. In Exiguobacterium sp. (strain ATCC BAA-1283 / AT1b), this protein is Thymidylate kinase.